Consider the following 122-residue polypeptide: Large ribosomal subunit protein uL14 (122 aa).

Belongs to the universal ribosomal protein uL14 family. In terms of assembly, part of the 50S ribosomal subunit. Forms a cluster with proteins L3 and L19. In the 70S ribosome, L14 and L19 interact and together make contacts with the 16S rRNA in bridges B5 and B8.

In terms of biological role, binds to 23S rRNA. Forms part of two intersubunit bridges in the 70S ribosome. The sequence is that of Large ribosomal subunit protein uL14 from Mycobacterium marinum (strain ATCC BAA-535 / M).